Reading from the N-terminus, the 83-residue chain is Disintegrin isoform D-2 (83 aa).

The region spanning 2-83 (PPVCGNELLE…GKSSDCPWNH (82 aa)) is the Disintegrin domain. Intrachain disulfides connect C5–C24, C16–C34, C18–C29, C28–C51, C42–C48, C47–C72, and C60–C79. Positions 64–66 (RGD) match the Cell attachment site motif.

Belongs to the venom metalloproteinase (M12B) family. P-II subfamily. P-IIa sub-subfamily. Monomer (disintegrin). In terms of tissue distribution, expressed by the venom gland.

The protein localises to the secreted. Functionally, inhibits fibrinogen interaction with platelets. Acts by binding to the alpha-IIb/beta-3 (ITGA2B/ITGB3) on the platelet surface and inhibits aggregation induced by ADP, thrombin, platelet-activating factor and collagen. This is Disintegrin isoform D-2 from Bitis arietans (African puff adder).